Here is a 940-residue protein sequence, read N- to C-terminus: Insulin receptor substrate 1 (940 aa).

A PH domain is found at 8–109 (GMVLSGYHKK…WLDKLLLLQR (102 aa)). An IRS-type PTB domain is found at 122–236 (YEHVWQVIIQ…SAMSAKTDSN (115 aa)). Residues serine 284, serine 285, and serine 340 each carry the phosphoserine modification. Residue tyrosine 407 is modified to Phosphotyrosine; by INSR. Positions 407–410 (YIPM) match the YXXM motif 1 motif. A compositionally biased stretch (polar residues) spans 523-540 (NRSQNNISKEGPISGTST). Residues 523 to 549 (NRSQNNISKEGPISGTSTNREKKSTSA) are disordered. Serine 548 carries the post-translational modification Phosphoserine. The YXXM motif 2 motif lies at 639–642 (YLEM). Tyrosine 883 carries the post-translational modification Phosphotyrosine; by INSR. The segment at 895–915 (NPAKYLKRGSRESPPVATCAE) is disordered. Phosphoserine occurs at positions 904 and 907. Tyrosine 920 carries the phosphotyrosine; by INSR modification.

As to quaternary structure, bindings to phosphatidylinositol 3-kinase and SHP2.

Its function is as follows. Activates phosphatidylinositol 3-kinase when bound to the regulatory p85 subunit. May mediate the control of various cellular processes by insulin-like peptides. When phosphorylated by the insulin receptor binds specifically to various cellular proteins containing SH2 domains. Involved in control of cell proliferation, cell size, and body and organ growth throughout development. Also has a role in a signaling pathway controlling the physiological response required to endure periods of low nutrient conditions. Insulin/insulin-like growth factor (IGF) signaling pathway has a role in regulating aging and is necessary in the ovary for vitellogenic maturation. This chain is Insulin receptor substrate 1, found in Drosophila ananassae (Fruit fly).